A 545-amino-acid chain; its full sequence is 1,3-beta-glucanosyltransferase ARB_07487 (545 aa).

The first 19 residues, 1–19, serve as a signal peptide directing secretion; the sequence is MKFSSLAAATALVAGSVVA. N-linked (GlcNAc...) asparagine glycans are attached at residues Asn51 and Asn69. Cys88 and Cys117 are disulfide-bonded. (1,3-beta-D-glucosyl)n-binding positions include Tyr106, 133–141, Asn174, and Glu175; that span reads SEPSTSIIR. Glu175 functions as the Proton donor in the catalytic mechanism. N-linked (GlcNAc...) asparagine glycosylation occurs at Asn179. (1,3-beta-D-glucosyl)n is bound by residues Asp216 and Arg221. 5 disulfide bridges follow: Cys230–Cys363, Cys248–Cys279, Cys384–Cys437, Cys393–Cys464, and Cys412–Cys419. Catalysis depends on Glu276, which acts as the Nucleophile. Residue Tyr308 participates in (1,3-beta-D-glucosyl)n binding. The tract at residues 493–513 is disordered; sequence GTGSVTSAPGSGGNKPDQGAA. Ala512 carries the GPI-anchor amidated alanine lipid modification. Positions 513–545 are cleaved as a propeptide — removed in mature form; it reads ASTISAPSVNLGIVKLGAYIFCAVLAGAGMILI.

The protein belongs to the glycosyl hydrolase 72 family. Post-translationally, the GPI-anchor is attached to the protein in the endoplasmic reticulum and serves to target the protein to the cell surface. There, the glucosamine-inositol phospholipid moiety is cleaved off and the GPI-modified mannoprotein is covalently attached via its lipidless GPI glycan remnant to the 1,6-beta-glucan of the outer cell wall layer.

The protein localises to the secreted. It is found in the cell membrane. Its subcellular location is the cell wall. In terms of biological role, splits internally a 1,3-beta-glucan molecule and transfers the newly generated reducing end (the donor) to the non-reducing end of another 1,3-beta-glucan molecule (the acceptor) forming a 1,3-beta linkage, resulting in the elongation of 1,3-beta-glucan chains in the cell wall. Involved in cell wall biosynthesis and morphogenesis. The sequence is that of 1,3-beta-glucanosyltransferase ARB_07487 from Arthroderma benhamiae (strain ATCC MYA-4681 / CBS 112371) (Trichophyton mentagrophytes).